We begin with the raw amino-acid sequence, 329 residues long: Phospholipid scramblase 4 (329 aa).

The disordered stretch occupies residues 1–51 (MSGVVPTAPEQPAGEMENQTKPPDPRPDAPPEYNSHFLPGPPGTAVPPPTG). Positions 1–98 (MSGVVPTAPE…PMPNQSVPIT (98 aa)) are proline-rich domain (PRD). At 1 to 303 (MSGVVPTAPE…IHFPLDLDVK (303 aa)) the chain is on the cytoplasmic side. Residues 18 to 25 (NQTKPPDP) carry the SH3-binding 1 motif. Residues 30 to 33 (PPEY) carry the PPxY motif motif. Over residues 39-51 (PGPPGTAVPPPTG) the composition is skewed to pro residues. The SH3-binding 2 motif lies at 41–49 (PPGTAVPPP). 2 positions are modified to phosphotyrosine; by ABL: Tyr83 and Tyr88. The SH3-binding 3 signature appears at 98 to 106 (TWMPGPTPM). 5 S-palmitoyl cysteine lipidation sites follow: Cys197, Cys198, Cys199, Cys201, and Cys202. A Nuclear localization signal motif is present at residues 271-283 (NIGSIIRKWNGLL). The helical transmembrane segment at 304 to 320 (MKAMIFGACFLIDFMYF) threads the bilayer. Residues 321-329 (ERSPPQRSR) are Extracellular-facing.

This sequence belongs to the phospholipid scramblase family. As to quaternary structure, interacts with PDCD6. Interacts with KPNA2; this interaction mediates the nucleus import of PLSCR4. Ca(2+) serves as cofactor. The cofactor is Mg(2+). It depends on Zn(2+) as a cofactor. Expressed in heart, brain, placenta, lung, liver, kidney, pancreas, spleen, thymus, prostate, testis, uterus, small intestine and colon. Not detected in peripheral blood lymphocytes.

It is found in the cell membrane. The protein localises to the nucleus. It carries out the reaction a 1,2-diacyl-sn-glycero-3-phosphocholine(in) = a 1,2-diacyl-sn-glycero-3-phosphocholine(out). It catalyses the reaction a 1,2-diacyl-sn-glycero-3-phospho-L-serine(in) = a 1,2-diacyl-sn-glycero-3-phospho-L-serine(out). In terms of biological role, catalyzes metal ion-induced ATP-independent rapid bidirectional and non-specific movement of phospholipids (lipid scrambling or lipid flip-flop) between the inner and outer leaflet of the plasma membrane and participates in the redistribution of phospholipids between membrane leaflets. Metal ions bind to the calcium-binding site and induce conformation change in the protein. Has a greater affi nity for Ca(2+) than Mg(2+) and Zn(2+). The chain is Phospholipid scramblase 4 from Homo sapiens (Human).